Here is a 376-residue protein sequence, read N- to C-terminus: MSLSPTLELAKDLIRRQSVTPDDAGCQELMMSRLAPLGFSGENLRFGETDNLWARKGNNGPVLAFAGHTDVVPTGPEKNWAHPPFDPIIKDGYLHGRGAADMKGSLAAFITACERFVANHPNHRGSIALLITSDEEGPAQDGTVKVVETLEARNEKMDWCLIGEPSSTHQVGDVIKNGRRGSLHGYLTVRGVQGHVAYPHLAENAVHNVAPALDALAKEFWDNGNDFFPPTTFQITRVEAGVGSNIVPGECLVHFNFRYCTENTAESLEERVVAILDRHNLKYDLQWHLSGRPFLTDKGALVSAAQNAIRTVTGRETELSTSGGTSDGRFIAPTGAQVVELGPINATIHKVDECVKAEDLDTLSEIYEQILVELLA.

Zn(2+) is bound at residue His68. Asp70 is a catalytic residue. Asp101 contacts Zn(2+). Glu135 functions as the Proton acceptor in the catalytic mechanism. Residues Glu136, Glu164, and His349 each coordinate Zn(2+).

It belongs to the peptidase M20A family. DapE subfamily. Homodimer. The cofactor is Zn(2+). Requires Co(2+) as cofactor.

It carries out the reaction N-succinyl-(2S,6S)-2,6-diaminopimelate + H2O = (2S,6S)-2,6-diaminopimelate + succinate. It functions in the pathway amino-acid biosynthesis; L-lysine biosynthesis via DAP pathway; LL-2,6-diaminopimelate from (S)-tetrahydrodipicolinate (succinylase route): step 3/3. Its function is as follows. Catalyzes the hydrolysis of N-succinyl-L,L-diaminopimelic acid (SDAP), forming succinate and LL-2,6-diaminopimelate (DAP), an intermediate involved in the bacterial biosynthesis of lysine and meso-diaminopimelic acid, an essential component of bacterial cell walls. The sequence is that of Succinyl-diaminopimelate desuccinylase from Marinobacter nauticus (strain ATCC 700491 / DSM 11845 / VT8) (Marinobacter aquaeolei).